A 135-amino-acid chain; its full sequence is ATP synthase epsilon chain 1 (135 aa).

The protein belongs to the ATPase epsilon chain family. F-type ATPases have 2 components, CF(1) - the catalytic core - and CF(0) - the membrane proton channel. CF(1) has five subunits: alpha(3), beta(3), gamma(1), delta(1), epsilon(1). CF(0) has three main subunits: a, b and c.

It localises to the cell inner membrane. Produces ATP from ADP in the presence of a proton gradient across the membrane. This chain is ATP synthase epsilon chain 1, found in Nitrobacter hamburgensis (strain DSM 10229 / NCIMB 13809 / X14).